The sequence spans 160 residues: Lymphocyte antigen 96 (160 aa).

The signal sequence occupies residues 1–18 (MLPFLFFSTLFSSIFTEA). Cystine bridges form between cysteine 25–cysteine 51, cysteine 37–cysteine 148, and cysteine 95–cysteine 105. An N-linked (GlcNAc...) asparagine glycan is attached at asparagine 26. Asparagine 114 carries an N-linked (GlcNAc...) asparagine glycan. The tract at residues 119–123 (FSFKG) is interaction with lipopolysaccharide.

In terms of assembly, heterogeneous homomer formed from homodimers; disulfide-linked. Belongs to the lipopolysaccharide (LPS) receptor, a multi-protein complex containing at least CD14, LY96 and TLR4. Binds to the extracellular domains of TLR2 and TLR4. Ligand binding induces interaction with TLR4 and oligomerization of the complex. In terms of processing, N-glycosylated; high-mannose.

It localises to the secreted. The protein resides in the extracellular space. Functionally, binds bacterial lipopolysaccharide (LPS). Cooperates with TLR4 in the innate immune response to bacterial lipopolysaccharide (LPS), and with TLR2 in the response to cell wall components from Gram-positive and Gram-negative bacteria. Enhances TLR4-dependent activation of NF-kappa-B. Cells expressing both LY96 and TLR4, but not TLR4 alone, respond to LPS. This is Lymphocyte antigen 96 (LY96) from Homo sapiens (Human).